Consider the following 148-residue polypeptide: Endoribonuclease YbeY (148 aa).

Zn(2+) contacts are provided by His112, His116, and His122.

Belongs to the endoribonuclease YbeY family. Requires Zn(2+) as cofactor.

It is found in the cytoplasm. In terms of biological role, single strand-specific metallo-endoribonuclease involved in late-stage 70S ribosome quality control and in maturation of the 3' terminus of the 16S rRNA. This chain is Endoribonuclease YbeY, found in Albidiferax ferrireducens (strain ATCC BAA-621 / DSM 15236 / T118) (Rhodoferax ferrireducens).